The primary structure comprises 432 residues: Ornithine decarboxylase 1A, chloroplastic (432 aa).

Position 95 is an N6-(pyridoxal phosphate)lysine (Lys-95). Pyridoxal 5'-phosphate is bound by residues Ser-227, Gly-265, and 298–301 (EPGR). A substrate-binding site is contributed by 341 to 342 (YD). The active-site Proton donor; shared with dimeric partner is Cys-377. Asp-378 contributes to the substrate binding site. A pyridoxal 5'-phosphate-binding site is contributed by Tyr-406.

It belongs to the Orn/Lys/Arg decarboxylase class-II family. Homodimer. Only the dimer is catalytically active, as the active sites are constructed of residues from both monomers. The cofactor is pyridoxal 5'-phosphate.

It is found in the plastid. It localises to the chloroplast. It carries out the reaction L-ornithine + H(+) = putrescine + CO2. The protein operates within alkaloid biosynthesis; nicotine biosynthesis. It functions in the pathway amine and polyamine biosynthesis; putrescine biosynthesis via L-ornithine pathway; putrescine from L-ornithine: step 1/1. Its function is as follows. Involved in the biosynthesis of pyridine alkaloid natural products, leading mainly to the production of anabasine, anatabine, nicotine and nornicotine, effective deterrents against herbivores with antiparasitic and pesticide properties (neurotoxins); nornicotine serves as the precursor in the synthesis of the carcinogen compound N'-nitrosonornicotine (NNN). Catalyzes the first and rate-limiting step of polyamine biosynthesis that converts ornithine into putrescine, which is the precursor for the polyamines, spermidine and spermine. Polyamines are essential for cell proliferation and are implicated in cellular processes, ranging from DNA replication to apoptosis. This is Ornithine decarboxylase 1A, chloroplastic from Nicotiana tabacum (Common tobacco).